We begin with the raw amino-acid sequence, 230 residues long: Interleukin-6 (230 aa).

An N-terminal signal peptide occupies residues 1-24 (MASKHNADLSSAAMLAALLLCALG). Cys96 and Cys106 are oxidised to a cystine. The N-linked (GlcNAc...) asparagine glycan is linked to Asn100. Over residues 206-218 (REMPKQKRRKDDG) the composition is skewed to basic and acidic residues. A disordered region spans residues 206–230 (REMPKQKRRKDDGIIPPIHPSYQMT).

The protein belongs to the IL-6 superfamily. As to quaternary structure, component of a hexamer of two molecules each of IL6, IL6R and IL6ST; first binds to IL6R to associate with the signaling subunit IL6ST. Expressed in kidney and spleen. Low expression in liver and gills.

Its subcellular location is the secreted. In terms of biological role, cytokine with a wide variety of biological functions in immunity, tissue regeneration, and metabolism. Binds to IL6R, then the complex associates to the signaling subunit IL6ST/gp130 to trigger the intracellular IL6-signaling pathway. The interaction with the membrane-bound IL6R and IL6ST stimulates 'classic signaling', whereas the binding of IL6 and soluble IL6R to IL6ST stimulates 'trans-signaling'. Alternatively, 'cluster signaling' occurs when membrane-bound IL6:IL6R complexes on transmitter cells activate IL6ST receptors on neighboring receiver cells. The sequence is that of Interleukin-6 (il6) from Paralichthys olivaceus (Bastard halibut).